Consider the following 564-residue polypeptide: Dihydroxy-acid dehydratase (564 aa).

Cys51 serves as a coordination point for [2Fe-2S] cluster. A Mg(2+)-binding site is contributed by Asp83. [2Fe-2S] cluster is bound at residue Cys124. Asp125 and Lys126 together coordinate Mg(2+). Lys126 carries the N6-carboxylysine modification. Cys196 is a binding site for [2Fe-2S] cluster. Glu448 serves as a coordination point for Mg(2+). Ser474 (proton acceptor) is an active-site residue.

The protein belongs to the IlvD/Edd family. As to quaternary structure, homodimer. [2Fe-2S] cluster is required as a cofactor. Requires Mg(2+) as cofactor.

The enzyme catalyses (2R)-2,3-dihydroxy-3-methylbutanoate = 3-methyl-2-oxobutanoate + H2O. The catalysed reaction is (2R,3R)-2,3-dihydroxy-3-methylpentanoate = (S)-3-methyl-2-oxopentanoate + H2O. It participates in amino-acid biosynthesis; L-isoleucine biosynthesis; L-isoleucine from 2-oxobutanoate: step 3/4. Its pathway is amino-acid biosynthesis; L-valine biosynthesis; L-valine from pyruvate: step 3/4. Functions in the biosynthesis of branched-chain amino acids. Catalyzes the dehydration of (2R,3R)-2,3-dihydroxy-3-methylpentanoate (2,3-dihydroxy-3-methylvalerate) into 2-oxo-3-methylpentanoate (2-oxo-3-methylvalerate) and of (2R)-2,3-dihydroxy-3-methylbutanoate (2,3-dihydroxyisovalerate) into 2-oxo-3-methylbutanoate (2-oxoisovalerate), the penultimate precursor to L-isoleucine and L-valine, respectively. This is Dihydroxy-acid dehydratase from Pyrobaculum calidifontis (strain DSM 21063 / JCM 11548 / VA1).